The primary structure comprises 209 residues: Thymidylate kinase (209 aa).

Position 10 to 17 (glycine 10 to threonine 17) interacts with ATP.

The protein belongs to the thymidylate kinase family.

The catalysed reaction is dTMP + ATP = dTDP + ADP. Functionally, phosphorylation of dTMP to form dTDP in both de novo and salvage pathways of dTTP synthesis. This is Thymidylate kinase from Synechococcus sp. (strain CC9605).